The chain runs to 482 residues: CBL-interacting serine/threonine-protein kinase 23 (482 aa).

Low complexity predominate over residues 1–25 (MASRTTPSRSTPSRSTPSGSSSGGR). Residues 1–29 (MASRTTPSRSTPSRSTPSGSSSGGRTRVG) form a disordered region. In terms of domain architecture, Protein kinase spans 31–286 (YELGRTLGEG…FAEVIENEWF (256 aa)). Residues 37 to 45 (LGEGTFAKV) and lysine 60 each bind ATP. Aspartate 154 functions as the Proton acceptor in the catalytic mechanism. Positions 172-201 (DFGLSALPQQVREDGLLHTTCGTPNYVAPE) are activation loop. Serine 176 carries the post-translational modification Phosphoserine. At threonine 190 the chain carries Phosphothreonine. The region spanning 328-352 (KTPVTMNAFELISTSQGLNLGSLFE) is the NAF domain. Residues 359 to 388 (KRKTRFTSKSSANEIVTKIEAAAAPMGFDV) are PPI. A disordered region spans residues 459–482 (KEEGTDGGGTNGAMANRTIAKQST).

Belongs to the protein kinase superfamily. CAMK Ser/Thr protein kinase family. SNF1 subfamily. Part of a K(+)-channel calcium-sensing kinase/phosphatase complex composed by a calcium sensor CBL (CBL1, CBL2, CBL3 or CBL9), a kinase CIPK (CIPK6, CIPK16 or CIPK23), a phosphatase PP2C (AIP1) and a K(+)-channel (AKT1). Interacts with AKT1, CBL1, CBL2, CBL3, CBL5, CBL8, CBL9 and NRT1.1. Mn(2+) is required as a cofactor. Autophosphorylated. As to expression, in seedlings, mostly in vascular bundles, and in roots, especially in cortex and endodermis cells. In adult plants, mostly expressed in flowers, and, to a lower extent, in roots, leaves, stems and siliques, particularly in vascular tissues. Also detected in guard cells and root hairs.

Its subcellular location is the cell membrane. It carries out the reaction L-seryl-[protein] + ATP = O-phospho-L-seryl-[protein] + ADP + H(+). The catalysed reaction is L-threonyl-[protein] + ATP = O-phospho-L-threonyl-[protein] + ADP + H(+). Functionally, CIPK serine-threonine protein kinases interact with CBL proteins. Binding of a CBL protein to the regulatory NAF domain of CIPK protein leads to activation of the kinase in a calcium-dependent manner. Downstream of CBL1, CBL2, CBL3 and CBL9, regulates by phosphorylation the K(+) conductance and uptake of AKT1 in low K(+) condition, in response to calcium signaling and during the stomatal opening regulation by monitoring the turgor pressure in guard cells. In response to low nitrate concentration, phosphorylates NRT1.1, switching it from a low-affinity nitrate transporter to a high-affinity transporter. Confers tolerance to low potassium conditions. Involved in drought sensitivity and leaf transpiration. The chain is CBL-interacting serine/threonine-protein kinase 23 (CIPK23) from Arabidopsis thaliana (Mouse-ear cress).